The sequence spans 607 residues: Zinc metalloproteinase-disintegrin-like atrase-A (607 aa).

Positions Met1–Ser20 are cleaved as a signal peptide. Positions Ile21–Glu196 are excised as a propeptide. Positions Lys205 to Pro398 constitute a Peptidase M12B domain. Glu208 contributes to the Ca(2+) binding site. 2 N-linked (GlcNAc...) asparagine glycosylation sites follow: Asn220 and Asn270. Residue Asp290 coordinates Ca(2+). N-linked (GlcNAc...) asparagine glycosylation is present at Asn301. Intrachain disulfides connect Cys314–Cys393, Cys353–Cys377, and Cys355–Cys360. The Zn(2+) site is built by His338, His342, and His348. Ca(2+)-binding residues include Cys393, Asn396, Asn411, Phe413, Glu415, Glu418, and Asp421. One can recognise a Disintegrin domain in the interval Arg406–Asn492. Disulfide bonds link Cys409–Cys438, Cys420–Cys433, Cys422–Cys428, Cys432–Cys455, Cys446–Cys452, Cys451–Cys477, Cys464–Cys484, Cys471–Cys503, Cys496–Cys508, Cys515–Cys565, Cys530–Cys573, Cys543–Cys553, Cys560–Cys599, and Cys593–Cys604. Asn434 is a glycosylation site (N-linked (GlcNAc...) asparagine). The D/ECD-tripeptide motif lies at Asp470 to Asp472. Asp472, Leu473, Glu475, Asp487, and Ser488 together coordinate Ca(2+). Asn522 carries an N-linked (GlcNAc...) asparagine glycan.

This sequence belongs to the venom metalloproteinase (M12B) family. P-III subfamily. P-IIIa sub-subfamily. As to quaternary structure, monomer. The cofactor is Zn(2+). Expressed by the venom gland.

The protein localises to the secreted. In terms of biological role, snake venom zinc metalloproteinase that inhibits platelet aggregation by cleaving platelet glycoprotein Ib alpha (GP1BA) at Glu-298/Asp-299, and abolishes binding of von Willebrand factor (VWF) to GPIBA. In Naja atra (Chinese cobra), this protein is Zinc metalloproteinase-disintegrin-like atrase-A.